The sequence spans 860 residues: Leucine--tRNA ligase (860 aa).

Positions Pro-42–His-52 match the 'HIGH' region motif. Positions Lys-619 to Ser-623 match the 'KMSKS' region motif. Lys-622 contacts ATP.

The protein belongs to the class-I aminoacyl-tRNA synthetase family.

The protein resides in the cytoplasm. It catalyses the reaction tRNA(Leu) + L-leucine + ATP = L-leucyl-tRNA(Leu) + AMP + diphosphate. The chain is Leucine--tRNA ligase from Salmonella typhimurium (strain LT2 / SGSC1412 / ATCC 700720).